The chain runs to 142 residues: Large ribosomal subunit protein uL11 (142 aa).

This sequence belongs to the universal ribosomal protein uL11 family. In terms of assembly, part of the ribosomal stalk of the 50S ribosomal subunit. Interacts with L10 and the large rRNA to form the base of the stalk. L10 forms an elongated spine to which L12 dimers bind in a sequential fashion forming a multimeric L10(L12)X complex. Post-translationally, one or more lysine residues are methylated.

Functionally, forms part of the ribosomal stalk which helps the ribosome interact with GTP-bound translation factors. This Shewanella piezotolerans (strain WP3 / JCM 13877) protein is Large ribosomal subunit protein uL11.